A 76-amino-acid polypeptide reads, in one-letter code: Cytochrome c oxidase subunit 6C-1 (76 aa).

Residues 4–14 (GALLPKPQMHD) lie on the Mitochondrial matrix side of the membrane. A helical membrane pass occupies residues 15-55 (PLSKRLWVHIVGAFIVDLGVAAAHKFGAAKPRKKAYADFYR). At 56 to 76 (NHDPMKDFDEMRKAGVFRSVK) the chain is on the mitochondrial intermembrane side.

Belongs to the cytochrome c oxidase subunit 6c family. Component of the cytochrome c oxidase (complex IV, CIV), a multisubunit enzyme composed of 14 subunits. The complex is composed of a catalytic core of 3 subunits MT-CO1, MT-CO2 and MT-CO3, encoded in the mitochondrial DNA, and 11 supernumerary subunits COX4I, COX5A, COX5B, COX6A, COX6B, COX6C, COX7A, COX7B, COX7C, COX8 and NDUFA4, which are encoded in the nuclear genome. The complex exists as a monomer or a dimer and forms supercomplexes (SCs) in the inner mitochondrial membrane with NADH-ubiquinone oxidoreductase (complex I, CI) and ubiquinol-cytochrome c oxidoreductase (cytochrome b-c1 complex, complex III, CIII), resulting in different assemblies (supercomplex SCI(1)III(2)IV(1) and megacomplex MCI(2)III(2)IV(2)).

It localises to the mitochondrion inner membrane. It participates in energy metabolism; oxidative phosphorylation. Component of the cytochrome c oxidase, the last enzyme in the mitochondrial electron transport chain which drives oxidative phosphorylation. The respiratory chain contains 3 multisubunit complexes succinate dehydrogenase (complex II, CII), ubiquinol-cytochrome c oxidoreductase (cytochrome b-c1 complex, complex III, CIII) and cytochrome c oxidase (complex IV, CIV), that cooperate to transfer electrons derived from NADH and succinate to molecular oxygen, creating an electrochemical gradient over the inner membrane that drives transmembrane transport and the ATP synthase. Cytochrome c oxidase is the component of the respiratory chain that catalyzes the reduction of oxygen to water. Electrons originating from reduced cytochrome c in the intermembrane space (IMS) are transferred via the dinuclear copper A center (CU(A)) of subunit 2 and heme A of subunit 1 to the active site in subunit 1, a binuclear center (BNC) formed by heme A3 and copper B (CU(B)). The BNC reduces molecular oxygen to 2 water molecules using 4 electrons from cytochrome c in the IMS and 4 protons from the mitochondrial matrix. This chain is Cytochrome c oxidase subunit 6C-1 (Cox6c1), found in Rattus norvegicus (Rat).